The primary structure comprises 317 residues: Heme-binding protein HMX1 (317 aa).

At 1–289 (MEDSSNTIIP…FNKDSATRRA (289 aa)) the chain is on the cytoplasmic side. A helical; Anchor for type IV membrane protein membrane pass occupies residues 290–310 (LHTVMLLVLSIIAIWVLYFLV).

The cofactor is heme.

The protein resides in the endoplasmic reticulum membrane. Its function is as follows. Plays an important role in the degradation of heme under conditions of iron deprivation. The protein is Heme-binding protein HMX1 (HMX1) of Saccharomyces cerevisiae (strain ATCC 204508 / S288c) (Baker's yeast).